The chain runs to 192 residues: Putative manganese efflux pump MntP (192 aa).

6 helical membrane-spanning segments follow: residues 2–22, 41–61, 62–82, 109–129, 136–156, and 172–192; these read IAII…AFAV, SALW…YAAS, AFSA…LAFI, MLPL…SLAF, FAIL…LYIG, and GVVL…VIAF.

The protein belongs to the MntP (TC 9.B.29) family.

The protein resides in the cell membrane. Its function is as follows. Probably functions as a manganese efflux pump. The chain is Putative manganese efflux pump MntP from Bifidobacterium longum subsp. infantis (strain ATCC 15697 / DSM 20088 / JCM 1222 / NCTC 11817 / S12).